Here is a 164-residue protein sequence, read N- to C-terminus: Endoribonuclease YbeY (164 aa).

Residues His114, His118, and His124 each coordinate Zn(2+).

This sequence belongs to the endoribonuclease YbeY family. Zn(2+) is required as a cofactor.

It is found in the cytoplasm. Functionally, single strand-specific metallo-endoribonuclease involved in late-stage 70S ribosome quality control and in maturation of the 3' terminus of the 16S rRNA. This is Endoribonuclease YbeY from Mycoplasmoides gallisepticum (strain R(low / passage 15 / clone 2)) (Mycoplasma gallisepticum).